Reading from the N-terminus, the 348-residue chain is Anthranilate phosphoribosyltransferase (348 aa).

Residues Gly87, Gly90–Asp91, Thr95, Asn97–Thr100, Lys115–Gly123, and Ser127 contribute to the 5-phospho-alpha-D-ribose 1-diphosphate site. Gly87 serves as a coordination point for anthranilate. Position 99 (Ser99) interacts with Mg(2+). Asn118 contributes to the anthranilate binding site. An anthranilate-binding site is contributed by Arg173. Asp232 and Glu233 together coordinate Mg(2+).

The protein belongs to the anthranilate phosphoribosyltransferase family. Homodimer. Mg(2+) serves as cofactor.

It catalyses the reaction N-(5-phospho-beta-D-ribosyl)anthranilate + diphosphate = 5-phospho-alpha-D-ribose 1-diphosphate + anthranilate. It participates in amino-acid biosynthesis; L-tryptophan biosynthesis; L-tryptophan from chorismate: step 2/5. Catalyzes the transfer of the phosphoribosyl group of 5-phosphorylribose-1-pyrophosphate (PRPP) to anthranilate to yield N-(5'-phosphoribosyl)-anthranilate (PRA). This chain is Anthranilate phosphoribosyltransferase, found in Synechococcus sp. (strain CC9311).